A 338-amino-acid polypeptide reads, in one-letter code: Plasminogen (338 aa).

Residues 9-88 enclose the Kringle 5 domain; sequence CMLGIGKGYQ…LFDYCDVPQC (80 aa). Intrachain disulfides connect cysteine 9/cysteine 88, cysteine 30/cysteine 71, cysteine 59/cysteine 83, cysteine 95/cysteine 213, cysteine 105/cysteine 113, cysteine 135/cysteine 151, cysteine 227/cysteine 294, cysteine 257/cysteine 273, and cysteine 284/cysteine 312. The Peptidase S1 domain maps to 109-336; the sequence is IVGGCVAIAH…FINWIERIMQ (228 aa). Serine 125 is subject to Phosphoserine. Active-site charge relay system residues include histidine 150 and aspartate 193. Serine 288 serves as the catalytic Charge relay system.

The protein belongs to the peptidase S1 family. Plasminogen subfamily. Interacts with CSPG4 and AMOT. Interacts (via the Kringle domains) with HRG; the interaction tethers PLG to the cell surface and enhances its activation. Interacts (via Kringle 4 domain) with ADA; the interaction stimulates PLG activation when in complex with DPP4. Angiostatin: Interacts with ATP5F1A; the interaction inhibits most of the angiogenic effects of angiostatin.

Its subcellular location is the secreted. It catalyses the reaction Preferential cleavage: Lys-|-Xaa &gt; Arg-|-Xaa, higher selectivity than trypsin. Converts fibrin into soluble products.. Its activity is regulated as follows. Converted into plasmin by plasminogen activators, both plasminogen and its activator being bound to fibrin. Activated with catalytic amounts of streptokinase. Plasmin dissolves the fibrin of blood clots and acts as a proteolytic factor in a variety of other processes including embryonic development, tissue remodeling, tumor invasion, and inflammation. In ovulation, weakens the walls of the Graafian follicle. It activates the urokinase-type plasminogen activator, collagenases and several complement zymogens, such as C1, C4 and C5. Cleavage of fibronectin and laminin leads to cell detachment and apoptosis. Also cleaves fibrin, thrombospondin and von Willebrand factor. Its role in tissue remodeling and tumor invasion may be modulated by CSPG4. Binds to cells. The protein is Plasminogen (PLG) of Equus caballus (Horse).